Here is a 63-residue protein sequence, read N- to C-terminus: Conotoxin Cal6.28 (63 aa).

A signal peptide spans 1 to 22 (MKLTCVLIVAVLILTACQVIAA). 3 disulfide bridges follow: Cys34-Cys45, Cys37-Cys51, and Cys44-Cys58.

This sequence belongs to the conotoxin O1 superfamily. As to expression, expressed by the venom duct.

Its subcellular location is the secreted. Functionally, probable neurotoxin. This Californiconus californicus (California cone) protein is Conotoxin Cal6.28.